The following is a 399-amino-acid chain: Galactokinase (399 aa).

Substrate is bound at residue 42 to 45 (EHTD). ATP is bound by residues Ser-76 and 133–139 (ASGLSSS). Positions 139 and 171 each coordinate Mg(2+). The active-site Proton acceptor is Asp-183. Residue Tyr-233 participates in substrate binding.

The protein belongs to the GHMP kinase family. GalK subfamily. As to quaternary structure, monomer.

It localises to the cytoplasm. It carries out the reaction alpha-D-galactose + ATP = alpha-D-galactose 1-phosphate + ADP + H(+). It functions in the pathway carbohydrate metabolism; galactose metabolism. Functionally, catalyzes the transfer of the gamma-phosphate of ATP to D-galactose to form alpha-D-galactose-1-phosphate (Gal-1-P). This chain is Galactokinase, found in Lactococcus lactis subsp. lactis (strain IL1403) (Streptococcus lactis).